A 264-amino-acid chain; its full sequence is ATP synthase subunit a (264 aa).

6 consecutive transmembrane segments (helical) span residues 29–49 (TWHI…LWIF), 90–110 (IAPL…MDMI), 134–154 (DVNI…YYSI), 177–197 (IPVN…SLAL), 208–228 (LIFI…SLGV), and 235–255 (LIFH…LTIV).

This sequence belongs to the ATPase A chain family. In terms of assembly, F-type ATPases have 2 components, CF(1) - the catalytic core - and CF(0) - the membrane proton channel. CF(1) has five subunits: alpha(3), beta(3), gamma(1), delta(1), epsilon(1). CF(0) has three main subunits: a(1), b(2) and c(9-12). The alpha and beta chains form an alternating ring which encloses part of the gamma chain. CF(1) is attached to CF(0) by a central stalk formed by the gamma and epsilon chains, while a peripheral stalk is formed by the delta and b chains.

The protein resides in the cell inner membrane. In terms of biological role, key component of the proton channel; it plays a direct role in the translocation of protons across the membrane. This Shewanella oneidensis (strain ATCC 700550 / JCM 31522 / CIP 106686 / LMG 19005 / NCIMB 14063 / MR-1) protein is ATP synthase subunit a.